The sequence spans 388 residues: F-box protein At4g00893 (388 aa).

The segment at Met1 to Arg30 is disordered. One can recognise an F-box domain in the interval Asn42–His88.

The protein is F-box protein At4g00893 of Arabidopsis thaliana (Mouse-ear cress).